Here is a 208-residue protein sequence, read N- to C-terminus: Mediator of RNA polymerase II transcription subunit 18 (208 aa).

It belongs to the Mediator complex subunit 18 family. As to quaternary structure, component of the Mediator complex.

The protein resides in the nucleus. Functionally, component of the Mediator complex, a coactivator involved in the regulated transcription of nearly all RNA polymerase II-dependent genes. Mediator functions as a bridge to convey information from gene-specific regulatory proteins to the basal RNA polymerase II transcription machinery. Mediator is recruited to promoters by direct interactions with regulatory proteins and serves as a scaffold for the assembly of a functional preinitiation complex with RNA polymerase II and the general transcription factors. This chain is Mediator of RNA polymerase II transcription subunit 18 (med18), found in Xenopus tropicalis (Western clawed frog).